Reading from the N-terminus, the 231-residue chain is S-norcoclaurine synthase 2 (231 aa).

A dopamine-binding site is contributed by tyrosine 107 to glutamate 109. Lysine 121 acts as the Proton donor in catalysis. Aspartate 140 contributes to the (4-hydroxyphenyl)acetaldehyde binding site. The helical transmembrane segment at leucine 210 to proline 230 threads the bilayer.

Belongs to the BetVI family. As to expression, expressed in roots, stems and leaves. Detected in flower buds and germinating seeds. Low expression in carpels. Restricted to sieve elements of the phloem adjacent or proximal to laticifers.

It is found in the endoplasmic reticulum membrane. It localises to the vacuole membrane. It catalyses the reaction (4-hydroxyphenyl)acetaldehyde + dopamine = (S)-norcoclaurine + H2O. It participates in alkaloid biosynthesis; (S)-reticuline biosynthesis. Activity doubles within 5 hours of elicitor treatment and continues to increase for at least 80 hours. Involved in the biosynthesis of (S)-coclaurine, the common precursor of all benzylisoquinoline alkaloids such as morphine, sanguinarine, codeine or papaverine. Condenses dopamine and 4-hydroxyphenylacetaldehyde. This is S-norcoclaurine synthase 2 from Papaver somniferum (Opium poppy).